Reading from the N-terminus, the 100-residue chain is Small ribosomal subunit protein uS14c (100 aa).

Belongs to the universal ribosomal protein uS14 family. As to quaternary structure, part of the 30S ribosomal subunit.

The protein localises to the plastid. It localises to the chloroplast. Its function is as follows. Binds 16S rRNA, required for the assembly of 30S particles. This is Small ribosomal subunit protein uS14c from Huperzia lucidula (Shining clubmoss).